Consider the following 224-residue polypeptide: MNIEVGNISYTGAIISWSSSEPCLEDYYHIMYRPNWNSIFSGYLRYSFHHEEKVPRTISSVVLEHLAPSTLYFLCISCKKAAFPYRHYCTMFHTLDKSPLAPGSSLVDPQISLWVLMAILLACFTAVLAFICLQFWCVRCHEPRWSYRAGHMEEANGLVRWPEEAPDLGQREEDLQGLPLVEMPRKNSRDGAELDPEANQDAPDAGALQRGGGDPPAILPHCGE.

A Fibronectin type-III domain is found at 1–101 (MNIEVGNISY…FHTLDKSPLA (101 aa)). The helical transmembrane segment at 113–133 (LWVLMAILLACFTAVLAFICL) threads the bilayer. The segment at 175-224 (LQGLPLVEMPRKNSRDGAELDPEANQDAPDAGALQRGGGDPPAILPHCGE) is disordered. The segment covering 183 to 192 (MPRKNSRDGA) has biased composition (basic and acidic residues).

The protein resides in the membrane. The sequence is that of Fibronectin type III domain-containing protein 9 (FNDC9) from Homo sapiens (Human).